A 278-amino-acid chain; its full sequence is SPX domain-containing protein 2 (278 aa).

The 162-residue stretch at 1 to 162 (MKFGKSLSSQ…GSMIRLPFVQ (162 aa)) folds into the SPX domain. 2 disordered regions span residues 191-242 (PTNE…KSTV) and 255-278 (GSSTVSVFSLPPLHGSNGQDEPGR).

As to quaternary structure, interacts (via SPX domain) with PHR2 (via C-terminus). Interacts with RLI1 in the nucleus to prevents its positive regulation of leaf inclination during phosphate (Pi) starvation.

It is found in the nucleus. Inhibits PHR2 DNA-binding activity via a phosphate (Pi)-dependent protein interaction. Together with SPX1, plays a negative role in the regulation of leaf inclination by preventing RLI1 transcription factor activity in Pi depleted conditions. In Oryza sativa subsp. indica (Rice), this protein is SPX domain-containing protein 2.